Consider the following 562-residue polypeptide: Arginine--tRNA ligase (562 aa).

A 'HIGH' region motif is present at residues 122–132 (PNIAKDMHVGH).

The protein belongs to the class-I aminoacyl-tRNA synthetase family. Monomer.

The protein resides in the cytoplasm. It carries out the reaction tRNA(Arg) + L-arginine + ATP = L-arginyl-tRNA(Arg) + AMP + diphosphate. The polypeptide is Arginine--tRNA ligase (Chlamydia abortus (strain DSM 27085 / S26/3) (Chlamydophila abortus)).